The chain runs to 312 residues: Signal peptidase I (312 aa).

Residues 7 to 27 form a helical membrane-spanning segment; it reads IFLLTSTFFTGILWIIDHILL. Residues 28–63 lie on the Cytoplasmic side of the membrane; the sequence is IKNYFYNKKKTKNNNTILINKVILENKKCFFRSLSS. A helical transmembrane segment spans residues 64-84; that stretch reads LFPTFFIVFIIRSFIYEPFQI. The Extracellular portion of the chain corresponds to 85–312; that stretch reads PSGSMMPTLL…IRIKRIGNIY (228 aa). Catalysis depends on residues Ser88 and Lys142.

This sequence belongs to the peptidase S26 family.

The protein resides in the cell membrane. The enzyme catalyses Cleavage of hydrophobic, N-terminal signal or leader sequences from secreted and periplasmic proteins.. The polypeptide is Signal peptidase I (lepB) (Buchnera aphidicola subsp. Schizaphis graminum (strain Sg)).